A 417-amino-acid polypeptide reads, in one-letter code: Gamma-glutamyl phosphate reductase (417 aa).

Belongs to the gamma-glutamyl phosphate reductase family.

The protein resides in the cytoplasm. It catalyses the reaction L-glutamate 5-semialdehyde + phosphate + NADP(+) = L-glutamyl 5-phosphate + NADPH + H(+). The protein operates within amino-acid biosynthesis; L-proline biosynthesis; L-glutamate 5-semialdehyde from L-glutamate: step 2/2. Its function is as follows. Catalyzes the NADPH-dependent reduction of L-glutamate 5-phosphate into L-glutamate 5-semialdehyde and phosphate. The product spontaneously undergoes cyclization to form 1-pyrroline-5-carboxylate. The protein is Gamma-glutamyl phosphate reductase of Photorhabdus laumondii subsp. laumondii (strain DSM 15139 / CIP 105565 / TT01) (Photorhabdus luminescens subsp. laumondii).